A 306-amino-acid chain; its full sequence is Non-specific ribonucleoside hydrolase RihC (306 aa).

The active site involves His-235.

It belongs to the IUNH family. RihC subfamily.

In terms of biological role, hydrolyzes both purine and pyrimidine ribonucleosides with a broad-substrate specificity. The sequence is that of Non-specific ribonucleoside hydrolase RihC from Salmonella typhi.